We begin with the raw amino-acid sequence, 142 residues long: HTH-type transcriptional regulator MntR (142 aa).

The HTH dtxR-type domain occupies 1 to 63; the sequence is MPTPSMEDYI…YEKYRGLVLT (63 aa). Mn(2+) is bound by residues Asp-8, Glu-11, His-77, Glu-99, Glu-102, and His-103.

Belongs to the DtxR/MntR family. As to quaternary structure, homodimer.

It is found in the cytoplasm. DNA binding is strongly activated by Mn(2+). Central regulator of manganese homeostasis. The protein is HTH-type transcriptional regulator MntR of Bacillus cytotoxicus (strain DSM 22905 / CIP 110041 / 391-98 / NVH 391-98).